The following is a 360-amino-acid chain: DNA replication and repair protein RecF (360 aa).

ATP is bound at residue 30–37 (GQNGSGKT).

It belongs to the RecF family.

Its subcellular location is the cytoplasm. The RecF protein is involved in DNA metabolism; it is required for DNA replication and normal SOS inducibility. RecF binds preferentially to single-stranded, linear DNA. It also seems to bind ATP. In Shewanella frigidimarina (strain NCIMB 400), this protein is DNA replication and repair protein RecF.